The primary structure comprises 702 residues: Polyphosphate kinase (702 aa).

ATP is bound at residue N55. R389 and R419 together coordinate Mg(2+). The active-site Phosphohistidine intermediate is the H449. The ATP site is built by Y482, R578, and H606.

Belongs to the polyphosphate kinase 1 (PPK1) family. The cofactor is Mg(2+). An intermediate of this reaction is the autophosphorylated ppk in which a phosphate is covalently linked to a histidine residue through a N-P bond.

It carries out the reaction [phosphate](n) + ATP = [phosphate](n+1) + ADP. Its function is as follows. Catalyzes the reversible transfer of the terminal phosphate of ATP to form a long-chain polyphosphate (polyP). The protein is Polyphosphate kinase of Bacillus cereus (strain ATCC 14579 / DSM 31 / CCUG 7414 / JCM 2152 / NBRC 15305 / NCIMB 9373 / NCTC 2599 / NRRL B-3711).